Reading from the N-terminus, the 1044-residue chain is Eukaryotic translation initiation factor 3 subunit A (1044 aa).

Positions 92 to 121 (LKKFIELAEKKVTEAQAKADEIQSSLESAA) form a coiled coil. Positions 339–523 (MTKAASFVLL…GVLTFDTDIF (185 aa)) constitute a PCI domain. Residues 611-907 (IDKKKEAATD…EARRAARKAG (297 aa)) are a coiled coil. Basic and acidic residues predominate over residues 797 to 901 (SEKRHEEFEK…QREEEAEARR (105 aa)). A disordered region spans residues 797–1044 (SEKRHEEFEK…WVPRWKQQQS (248 aa)). 2 stretches are compositionally biased toward low complexity: residues 943–956 (KEAA…AAPA) and 1006–1017 (SSSSQPPSRTQT).

This sequence belongs to the eIF-3 subunit A family. As to quaternary structure, component of the eukaryotic translation initiation factor 3 (eIF-3) complex.

The protein localises to the cytoplasm. In terms of biological role, RNA-binding component of the eukaryotic translation initiation factor 3 (eIF-3) complex, which is involved in protein synthesis of a specialized repertoire of mRNAs and, together with other initiation factors, stimulates binding of mRNA and methionyl-tRNAi to the 40S ribosome. The eIF-3 complex specifically targets and initiates translation of a subset of mRNAs involved in cell proliferation. The protein is Eukaryotic translation initiation factor 3 subunit A (tif32) of Aspergillus clavatus (strain ATCC 1007 / CBS 513.65 / DSM 816 / NCTC 3887 / NRRL 1 / QM 1276 / 107).